We begin with the raw amino-acid sequence, 70 residues long: Small ribosomal subunit protein bS21C (70 aa).

The segment at 38–70 is disordered; the sequence is YEKPTTERKRKKAAAVARLRKQVRRSMPPKKKY. A compositionally biased stretch (basic residues) spans 45-70; it reads RKRKKAAAVARLRKQVRRSMPPKKKY.

The protein belongs to the bacterial ribosomal protein bS21 family.

The protein is Small ribosomal subunit protein bS21C of Burkholderia thailandensis (strain ATCC 700388 / DSM 13276 / CCUG 48851 / CIP 106301 / E264).